Reading from the N-terminus, the 956-residue chain is DNA ligase 4 (956 aa).

The ATP site is built by E307, K309, I310, R314, E371, F409, E476, K481, K498, and K500. K309 acts as the N6-AMP-lysine intermediate in catalysis. A Mg(2+)-binding site is contributed by E371. Position 476 (E476) interacts with Mg(2+). A disordered region spans residues L666–R700. BRCT domains follow at residues R700–L793 and P857–L956.

It belongs to the ATP-dependent DNA ligase family. It depends on Mg(2+) as a cofactor.

The protein localises to the nucleus. The catalysed reaction is ATP + (deoxyribonucleotide)n-3'-hydroxyl + 5'-phospho-(deoxyribonucleotide)m = (deoxyribonucleotide)n+m + AMP + diphosphate.. Functionally, DNA ligase involved in DNA non-homologous end joining (NHEJ); required for double-strand break (DSB) repair. The chain is DNA ligase 4 (LIG4) from Yarrowia lipolytica (strain CLIB 122 / E 150) (Yeast).